The sequence spans 751 residues: Photosystem I P700 chlorophyll a apoprotein A1 (751 aa).

The next 8 helical transmembrane spans lie at 73–96 (VFSA…FHGA), 159–182 (LYST…FHFH), 198–222 (LNHH…HVSL), 294–312 (TAHH…GHMY), 349–372 (WHAQ…HHQY), 388–414 (LSLF…IFMI), 436–458 (AIIS…LYIH), and 533–551 (FLVH…LILL). Residues C575 and C584 each coordinate [4Fe-4S] cluster. Transmembrane regions (helical) follow at residues 591 to 612 (HVFL…HFSW) and 665 to 687 (LSAY…MFLF). H676 is a chlorophyll a' binding site. Chlorophyll a-binding residues include M684 and Y692. W693 provides a ligand contact to phylloquinone. The helical transmembrane segment at 725-745 (AVGVAHYLLGGIATTWSFFLA) threads the bilayer.

The protein belongs to the PsaA/PsaB family. The PsaA/B heterodimer binds the P700 chlorophyll special pair and subsequent electron acceptors. PSI consists of a core antenna complex that captures photons, and an electron transfer chain that converts photonic excitation into a charge separation. The eukaryotic PSI reaction center is composed of at least 11 subunits. P700 is a chlorophyll a/chlorophyll a' dimer, A0 is one or more chlorophyll a, A1 is one or both phylloquinones and FX is a shared 4Fe-4S iron-sulfur center. is required as a cofactor.

The protein resides in the plastid. It is found in the chloroplast thylakoid membrane. It catalyses the reaction reduced [plastocyanin] + hnu + oxidized [2Fe-2S]-[ferredoxin] = oxidized [plastocyanin] + reduced [2Fe-2S]-[ferredoxin]. In terms of biological role, psaA and PsaB bind P700, the primary electron donor of photosystem I (PSI), as well as the electron acceptors A0, A1 and FX. PSI is a plastocyanin/cytochrome c6-ferredoxin oxidoreductase, converting photonic excitation into a charge separation, which transfers an electron from the donor P700 chlorophyll pair to the spectroscopically characterized acceptors A0, A1, FX, FA and FB in turn. Oxidized P700 is reduced on the lumenal side of the thylakoid membrane by plastocyanin or cytochrome c6. The chain is Photosystem I P700 chlorophyll a apoprotein A1 from Tupiella akineta (Green alga).